An 86-amino-acid chain; its full sequence is MKLTCVLIIAVLFLTACQLATAKTYSKGRQKHRALRSTDKNIKLTRRCTPDDGACAEPVQCCSTFCNPVTNMCIDWLGIGLSRSVL.

A signal peptide spans 1–22 (MKLTCVLIIAVLFLTACQLATA). A propeptide spanning residues 23–45 (KTYSKGRQKHRALRSTDKNIKLT) is cleaved from the precursor. Disulfide bonds link Cys48–Cys62, Cys55–Cys66, and Cys61–Cys73.

Belongs to the conotoxin O1 superfamily. As to expression, expressed by the venom duct.

It localises to the secreted. This is Conotoxin S6.10 from Conus striatus (Striated cone).